The primary structure comprises 302 residues: uncharacterized protein (302 aa).

Glu48 is an active-site residue.

It belongs to the PhzF family.

This is an uncharacterized protein from Clostridium acetobutylicum (strain ATCC 824 / DSM 792 / JCM 1419 / IAM 19013 / LMG 5710 / NBRC 13948 / NRRL B-527 / VKM B-1787 / 2291 / W).